The primary structure comprises 313 residues: Malate dehydrogenase (313 aa).

Residues 11–16 (GAGNIG) and Asp-35 contribute to the NAD(+) site. Positions 86 and 92 each coordinate substrate. NAD(+) is bound by residues Asn-99 and 122–124 (ISN). Residues Asn-124 and Arg-155 each coordinate substrate. His-179 serves as the catalytic Proton acceptor.

It belongs to the LDH/MDH superfamily. MDH type 3 family.

It catalyses the reaction (S)-malate + NAD(+) = oxaloacetate + NADH + H(+). Catalyzes the reversible oxidation of malate to oxaloacetate. In Sorangium cellulosum (strain So ce56) (Polyangium cellulosum (strain So ce56)), this protein is Malate dehydrogenase.